The primary structure comprises 126 residues: MAILGLGTDIVEIARIEAVIARSGDRLARRVLSDHEWSIWEQHQQPVRFLAKRFAVKEAAAKALGTGIRNGLAFNQFEVYNDELGKPKLRLWGEAKLLAERMGVRAIHVTLADERHYACATVIVES.

2 residues coordinate Mg(2+): D9 and E58.

It belongs to the P-Pant transferase superfamily. AcpS family. Mg(2+) serves as cofactor.

It localises to the cytoplasm. The catalysed reaction is apo-[ACP] + CoA = holo-[ACP] + adenosine 3',5'-bisphosphate + H(+). Functionally, transfers the 4'-phosphopantetheine moiety from coenzyme A to a Ser of acyl-carrier-protein. In Klebsiella pneumoniae (strain 342), this protein is Holo-[acyl-carrier-protein] synthase.